The chain runs to 350 residues: Phosphotriesterase-related protein (350 aa).

The a divalent metal cation site is built by His22, His24, Glu169, His201, His230, and Asp298.

This sequence belongs to the metallo-dependent hydrolases superfamily. Phosphotriesterase family. The cofactor is a divalent metal cation.

The protein is Phosphotriesterase-related protein of Drosophila melanogaster (Fruit fly).